The chain runs to 462 residues: Anthranilate synthase component 1 (462 aa).

Residues Ser-37 and Pro-244–Met-246 contribute to the L-tryptophan site. Gly-279 to Thr-280 is a chorismate binding site. Glu-306 provides a ligand contact to Mg(2+). Chorismate is bound by residues Tyr-394, Arg-414, Gly-428–Gly-430, and Gly-430. Glu-443 is a binding site for Mg(2+).

It belongs to the anthranilate synthase component I family. Heterotetramer consisting of two non-identical subunits: a beta subunit (TrpG) and a large alpha subunit (TrpE). Requires Mg(2+) as cofactor.

The catalysed reaction is chorismate + L-glutamine = anthranilate + pyruvate + L-glutamate + H(+). It participates in amino-acid biosynthesis; L-tryptophan biosynthesis; L-tryptophan from chorismate: step 1/5. With respect to regulation, feedback inhibited by tryptophan. Functionally, part of a heterotetrameric complex that catalyzes the two-step biosynthesis of anthranilate, an intermediate in the biosynthesis of L-tryptophan. In the first step, the glutamine-binding beta subunit (TrpG) of anthranilate synthase (AS) provides the glutamine amidotransferase activity which generates ammonia as a substrate that, along with chorismate, is used in the second step, catalyzed by the large alpha subunit of AS (TrpE) to produce anthranilate. In the absence of TrpG, TrpE can synthesize anthranilate directly from chorismate and high concentrations of ammonia. In Thermus thermophilus (strain ATCC 27634 / DSM 579 / HB8), this protein is Anthranilate synthase component 1 (trpE).